We begin with the raw amino-acid sequence, 627 residues long: uncharacterized protein (627 aa).

The Extracellular portion of the chain corresponds to 1-32 (MVDDSNYLTPHETALAVVATAMKKARLQLDTL). Residues 33–53 (LINSILGGVLFSSGSFLLVAV) traverse the membrane as a helical segment. Residues 54–66 (YSEDPDIVARNPG) lie on the Cytoplasmic side of the membrane. Residues 67–87 (IVNLITGVNFAMGLFYVVMMG) traverse the membrane as a helical segment. The Extracellular portion of the chain corresponds to 88 to 113 (ADLFNSNILFFSVGVLRKAVTIYDLM). Residues 114–134 (ISWVVSWLGNIAGSLFVSYLF) form a helical membrane-spanning segment. The Cytoplasmic segment spans residues 135–165 (GHLSGISSQKLWIIGSRQIIEQKVSYSFVQT). Residues 166–186 (FLKGIACNFFVCLAIYLQLMA) form a helical membrane-spanning segment. At 187–192 (KPIHVK) the chain is on the extracellular side. Residues 193–213 (FILMSFPIIDFIGIGFTHVVG) form a helical membrane-spanning segment. Over 214–218 (DMSAS) the chain is Cytoplasmic. A helical membrane pass occupies residues 219–239 (FIAMLNGANVSVGKYIWKLLI). The Extracellular segment spans residues 240-245 (PASLGN). The chain crosses the membrane as a helical span at residues 246–266 (IVGGLFFSAVVPFYLHLVVVE). Over 267–627 (RDRKRLSLPE…FYNRHTSPQL (361 aa)) the chain is Cytoplasmic. Thr-305 is modified (phosphothreonine). A disordered region spans residues 512-537 (PPILPRTTQDTFPHNAPASSPAYTDD). Residues 517–533 (RTTQDTFPHNAPASSPA) are compositionally biased toward polar residues. Ser-546 carries the post-translational modification Phosphoserine. At Thr-588 the chain carries Phosphothreonine. Residues 605-614 (STTRRQKITE) are compositionally biased toward basic and acidic residues. Positions 605–627 (STTRRQKITEPKNFYNRHTSPQL) are disordered.

Belongs to the FNT transporter (TC 1.A.16) family.

It is found in the membrane. This is an uncharacterized protein from Saccharomyces cerevisiae (strain ATCC 204508 / S288c) (Baker's yeast).